A 228-amino-acid chain; its full sequence is Ankyrin repeat domain-containing protein 46 (228 aa).

ANK repeat units lie at residues 11–40, 44–73, 77–103, and 107–138; these read QTNV…DPNI, RGRT…DLLA, QGNT…KIDI, and QGAT…EVKG. Residues 195–215 form a helical membrane-spanning segment; it reads VLLLIFVIALLSLGIAYYVSG.

The protein resides in the membrane. The chain is Ankyrin repeat domain-containing protein 46 (ANKRD46) from Pongo abelii (Sumatran orangutan).